Consider the following 796-residue polypeptide: MESSNDFSNKDSDTVSLSPVEFSNYQCEINPGFHEFLKKSGFEDVGFRFNVVTILGSQSSGKSHLLNSLFNASFQTMDASRGHSQTTKGIWGSLVLPKDTSVSATVVFDSEGTDSRERGEGRLTFEHRSSLFCLALSDVVIVNLWYNSMGNLTGSNYGLLKTVVEANLELVDTNNEENYKTVLFFCVRDWSPSLSPLNVVKDYVLNNYMRSIWNEISKPARFENMGVESLFEIRVFGLSNAVTQPELFEKDVKEVKKTWESLKPKEYSRRVPSDGFFVYSKNVWKTIIEQNHLDIPTQKEMLSSYRCSEIKTAILESATTSVPELTETDFSEYLMSLLNKVESEYFSQASRYDPKVSEKVGKELLSQLCGKFQPCFESALAGYVKKLAVESSSLLDKEFTVNSSGKELKVANARPYTVWPSFSKKCEELQSKQSEKLSEHLSRFKVSFNKTVSFEYEFDAQPLKDHLNLLVSTEFEVLRSRHLGLLKQQLDSMCNSTFVMVKNNLLDRSLTEDEFWDYFDELFDETHKNCMDQLTTSYQGLVNRASKAEFAQLSLVLLLKAARHNFDELQNNLEQLLLERFDKFFNYQEFKGELVPTEWHKQSAQELNNRYKESKEDALTLLKVLKKTKTKKMPSFDLNDVKKNQYFYSTLGEPVSDKYSTPVTEQFALEVTNSCSKKFLEMYKNAQVVQNAGTSISSWRNIPPIFWLVLLVLGWNELRSVFKVLLRFYVVIPLLIVFYFTFSYSATKLLGPKADQYVKPVRDKVLSLFTALLAWFVRTLHMIASKSSSFKQRPAT.

The Cytoplasmic segment spans residues 1–701; it reads MESSNDFSNK…AGTSISSWRN (701 aa). Residues 46 to 280 enclose the GB1/RHD3-type G domain; it reads GFRFNVVTIL…VPSDGFFVYS (235 aa). 56–63 serves as a coordination point for GTP; sequence GSQSSGKS. A coiled-coil region spans residues 554-626; the sequence is SLVLLLKAAR…DALTLLKVLK (73 aa). The chain crosses the membrane as a helical span at residues 702-722; the sequence is IPPIFWLVLLVLGWNELRSVF. Residues 723–725 are Lumenal-facing; sequence KVL. Residues 726 to 746 traverse the membrane as a helical segment; that stretch reads LRFYVVIPLLIVFYFTFSYSA. The Cytoplasmic portion of the chain corresponds to 747–796; that stretch reads TKLLGPKADQYVKPVRDKVLSLFTALLAWFVRTLHMIASKSSSFKQRPAT.

This sequence belongs to the TRAFAC class dynamin-like GTPase superfamily. GB1/RHD3 GTPase family. RHD3 subfamily.

Its subcellular location is the endoplasmic reticulum membrane. Functionally, probable GTP-binding protein that may be involved in cell development. The polypeptide is Protein SEY1 homolog (Theileria parva (East coast fever infection agent)).